A 1062-amino-acid chain; its full sequence is Zinc finger protein swm (1062 aa).

One can recognise a PWI domain in the interval 7-75 (DKLKDWLSVV…ERLFDAIASE (69 aa)). 2 disordered regions span residues 119 to 145 (ADSPPPPPKDNVIKPDSNQVKLEQASQ) and 171 to 340 (KPAF…PDRV). Residues 134 to 145 (DSNQVKLEQASQ) are compositionally biased toward polar residues. The span at 172–182 (PAFDHKTKDSH) shows a compositional bias: basic and acidic residues. Residues 197–207 (SASPPGRSSGV) show a composition bias toward low complexity. Residues 208-220 (SGSGGGGPGGAGL) are compositionally biased toward gly residues. Over residues 234-249 (SRRRRASLRSRSRSRS) the composition is skewed to basic residues. Basic and acidic residues-rich tracts occupy residues 264-273 (RRVNEREKTQ) and 294-310 (RNFDRRRIGGNADDRPR). Positions 322–340 (RSMSPERNARRNQNSPDRV) are enriched in polar residues. The C3H1-type zinc finger occupies 363–391 (SHPRQRCRDFDEKGYCVRGETCPWDHGVN). Residues 416–463 (EIWARSGGPPPGAGQGPVPPPTQPGQTTINPFSGNVRPTTLMSGSGPS) form a disordered region. Positions 423 to 438 (GPPPGAGQGPVPPPTQ) are enriched in pro residues. Over residues 444–461 (INPFSGNVRPTTLMSGSG) the composition is skewed to polar residues. The RRM domain maps to 561–635 (SSLELRKVPR…RFIKVFWHND (75 aa)). Disordered stretches follow at residues 666 to 704 (NVPAVPTPNADGAKISNANPLTEAGAGNIGTPATEQANT), 716 to 741 (TTTAGGSAGGAAGAGAPGSGRPLNPA), 822 to 847 (QDQLQAQMQQQQQQQQPPVKKTKEQQ), 886 to 920 (SAANNKSTHYAPASGAPGGGAGRKRPNLPEGPTRV), and 1004 to 1062 (APVE…SWRR). A compositionally biased stretch (gly residues) spans 721–733 (GSAGGAAGAGAPG). The segment covering 823–840 (DQLQAQMQQQQQQQQPPV) has biased composition (low complexity). Positions 1018 to 1037 (SLENPKQLIQSVSESESLLG) are enriched in polar residues. The span at 1046 to 1056 (LEDEEEDEESE) shows a compositional bias: acidic residues.

It localises to the nucleus. In terms of biological role, negatively regulates Hedgehog (hh) protein signal in wing development. Regulates neural-specific glycosylation by binding to FucTA mRNA and facilitating its nuclear export in neural cells. This Drosophila melanogaster (Fruit fly) protein is Zinc finger protein swm.